Here is a 241-residue protein sequence, read N- to C-terminus: Carboxy-S-adenosyl-L-methionine synthase (241 aa).

S-adenosyl-L-methionine is bound by residues Tyr38, Gly63–Ser65, Asp88–Asn89, Asp116–Ile117, Asn131, and Arg198.

This sequence belongs to the class I-like SAM-binding methyltransferase superfamily. Cx-SAM synthase family. In terms of assembly, homodimer.

The catalysed reaction is prephenate + S-adenosyl-L-methionine = carboxy-S-adenosyl-L-methionine + 3-phenylpyruvate + H2O. In terms of biological role, catalyzes the conversion of S-adenosyl-L-methionine (SAM) to carboxy-S-adenosyl-L-methionine (Cx-SAM). In Actinobacillus succinogenes (strain ATCC 55618 / DSM 22257 / CCUG 43843 / 130Z), this protein is Carboxy-S-adenosyl-L-methionine synthase.